The sequence spans 229 residues: Large ribosomal subunit protein uL1 (229 aa).

Belongs to the universal ribosomal protein uL1 family. In terms of assembly, part of the 50S ribosomal subunit.

In terms of biological role, binds directly to 23S rRNA. The L1 stalk is quite mobile in the ribosome, and is involved in E site tRNA release. Protein L1 is also a translational repressor protein, it controls the translation of the L11 operon by binding to its mRNA. The chain is Large ribosomal subunit protein uL1 from Staphylococcus aureus (strain MRSA252).